The chain runs to 169 residues: Crossover junction endodeoxyribonuclease RuvC (169 aa).

Residues D12, E72, and D144 contribute to the active site. Mg(2+)-binding residues include D12, E72, and D144.

It belongs to the RuvC family. In terms of assembly, homodimer which binds Holliday junction (HJ) DNA. The HJ becomes 2-fold symmetrical on binding to RuvC with unstacked arms; it has a different conformation from HJ DNA in complex with RuvA. In the full resolvosome a probable DNA-RuvA(4)-RuvB(12)-RuvC(2) complex forms which resolves the HJ. Mg(2+) is required as a cofactor.

It localises to the cytoplasm. The enzyme catalyses Endonucleolytic cleavage at a junction such as a reciprocal single-stranded crossover between two homologous DNA duplexes (Holliday junction).. The RuvA-RuvB-RuvC complex processes Holliday junction (HJ) DNA during genetic recombination and DNA repair. Endonuclease that resolves HJ intermediates. Cleaves cruciform DNA by making single-stranded nicks across the HJ at symmetrical positions within the homologous arms, yielding a 5'-phosphate and a 3'-hydroxyl group; requires a central core of homology in the junction. The consensus cleavage sequence is 5'-(A/T)TT(C/G)-3'. Cleavage occurs on the 3'-side of the TT dinucleotide at the point of strand exchange. HJ branch migration catalyzed by RuvA-RuvB allows RuvC to scan DNA until it finds its consensus sequence, where it cleaves and resolves the cruciform DNA. This Azorhizobium caulinodans (strain ATCC 43989 / DSM 5975 / JCM 20966 / LMG 6465 / NBRC 14845 / NCIMB 13405 / ORS 571) protein is Crossover junction endodeoxyribonuclease RuvC.